Here is a 500-residue protein sequence, read N- to C-terminus: Plasma protease C1 inhibitor (500 aa).

The first 22 residues, 1–22, serve as a signal peptide directing secretion; that stretch reads MASRLTLLTLLLLLLAGDRASS. Positions 20–31 are enriched in low complexity; sequence ASSNPNATSSSS. Positions 20 to 43 are disordered; it reads ASSNPNATSSSSQDPESLQDRGEG. N-linked (GlcNAc...) (complex) asparagine glycosylation is present at Asn25. 2 O-linked (GalNAc...) threonine glycosylation sites follow: Thr47 and Thr48. O-linked (GalNAc...) serine glycosylation occurs at Ser64. Residues 65–118 form a disordered region; it reads LPTTNSTTNSATKITANTTDEPTTQPTTEPTTQPTIQPTQPTTQLPTDSPTQPT. The segment covering 67 to 118 has biased composition (low complexity); sequence TTNSTTNSATKITANTTDEPTTQPTTEPTTQPTIQPTQPTTQLPTDSPTQPT. N-linked (GlcNAc...) asparagine glycosylation is present at Asn69. The O-linked (GalNAc...) threonine glycan is linked to Thr71. A glycan (N-linked (GlcNAc...) asparagine) is linked at Asn81. Residues Thr83, Thr88, Thr92, and Thr96 are each glycosylated (O-linked (GalNAc...) threonine). 7 tandem repeats follow at residues 85–88, 89–92, 93–96, 97–100, 101–104, 105–108, and 116–119. The interval 85-119 is 7 X 4 AA tandem repeats of [QE]-P-T-[TQ]; the sequence is EPTTQPTTEPTTQPTIQPTQPTTQLPTDSPTQPTT. Intrachain disulfides connect Cys123/Cys428 and Cys130/Cys205. N-linked (GlcNAc...) (complex) asparagine glycosylation is found at Asn238 and Asn253. Residue Asn272 is glycosylated (N-linked (GlcNAc...) asparagine; in variant TA). Asn352 carries N-linked (GlcNAc...) (complex) asparagine glycosylation.

Belongs to the serpin family. As to quaternary structure, interacts with MASP1. (Microbial infection) Binds to E.coli stcE which allows localization of SERPING1 to cell membranes thus protecting the bacteria against complement-mediated lysis. Post-translationally, highly glycosylated (49%) with N- and O-glycosylation. O-glycosylated with core 1 or possibly core 8 glycans. N-glycan heterogeneity at Asn-25: Hex5HexNAc4 (minor), dHex1Hex5HexNAc4 (minor), Hex6HexNAc5 (major) and dHex1Hex6HexNAc5 (minor). Cleaved by C1S in vitro. In terms of processing, (Microbial infection) Can be proteolytically cleaved by E.coli stcE.

It is found in the secreted. Functionally, serine protease inhibitor, which acrs as a regulator of the classical complement pathway. Forms a proteolytically inactive stoichiometric complex with the C1r or C1s proteases. May also regulate blood coagulation, fibrinolysis and the generation of kinins. Very efficient inhibitor of FXIIa. Inhibits chymotrypsin and kallikrein. In Homo sapiens (Human), this protein is Plasma protease C1 inhibitor (SERPING1).